The primary structure comprises 515 residues: Bifunctional purine biosynthesis protein PurH (515 aa).

The 145-residue stretch at Met1 to Val145 folds into the MGS-like domain.

This sequence belongs to the PurH family.

It carries out the reaction (6R)-10-formyltetrahydrofolate + 5-amino-1-(5-phospho-beta-D-ribosyl)imidazole-4-carboxamide = 5-formamido-1-(5-phospho-D-ribosyl)imidazole-4-carboxamide + (6S)-5,6,7,8-tetrahydrofolate. It catalyses the reaction IMP + H2O = 5-formamido-1-(5-phospho-D-ribosyl)imidazole-4-carboxamide. Its pathway is purine metabolism; IMP biosynthesis via de novo pathway; 5-formamido-1-(5-phospho-D-ribosyl)imidazole-4-carboxamide from 5-amino-1-(5-phospho-D-ribosyl)imidazole-4-carboxamide (10-formyl THF route): step 1/1. It participates in purine metabolism; IMP biosynthesis via de novo pathway; IMP from 5-formamido-1-(5-phospho-D-ribosyl)imidazole-4-carboxamide: step 1/1. The chain is Bifunctional purine biosynthesis protein PurH from Streptococcus equi subsp. zooepidemicus (strain H70).